The following is a 643-amino-acid chain: Alpha-dioxygenase PIOX (643 aa).

Catalysis depends on His-168, which acts as the Proton acceptor. Residue Asp-169 coordinates Ca(2+). His-173 serves as a coordination point for heme b. Ca(2+) is bound by residues Thr-221, Trp-223, Asp-225, and Ser-227. Positions 393, 490, and 494 each coordinate heme b.

Belongs to the peroxidase family. Heme b is required as a cofactor. Requires Ca(2+) as cofactor.

The enzyme catalyses hexadecanoate + O2 = (2R)-2-hydroperoxyhexadecanoate. It carries out the reaction dodecanoate + O2 = (2R)-2-hydroperoxydodecanoate. Its function is as follows. Alpha-dioxygenase that catalyzes the primary oxygenation step of a variety of 14-20 carbon fatty acids, containing up to three unsaturated bonds, into their corresponding 2R-hydroperoxides. Involved in the production of oxylipins that function in cell signaling, wound healing, and protection from infection. The alpha-oxidation pathway of fatty acids may play a role during plant developmental processes. The protein is Alpha-dioxygenase PIOX of Pisum sativum (Garden pea).